The sequence spans 123 residues: NADH-quinone oxidoreductase subunit A (123 aa).

Transmembrane regions (helical) follow at residues 11 to 31 (YLPIAIFFGIAVLLSVLIMIL), 68 to 88 (LVAILFIIFDLEIAFLVPWAI), and 93 to 113 (IGKMGFFSMMFFLFVLIIGFI).

This sequence belongs to the complex I subunit 3 family. NDH-1 is composed of 14 different subunits. Subunits NuoA, H, J, K, L, M, N constitute the membrane sector of the complex.

It localises to the cell inner membrane. It carries out the reaction a quinone + NADH + 5 H(+)(in) = a quinol + NAD(+) + 4 H(+)(out). In terms of biological role, NDH-1 shuttles electrons from NADH, via FMN and iron-sulfur (Fe-S) centers, to quinones in the respiratory chain. The immediate electron acceptor for the enzyme in this species is believed to be ubiquinone. Couples the redox reaction to proton translocation (for every two electrons transferred, four hydrogen ions are translocated across the cytoplasmic membrane), and thus conserves the redox energy in a proton gradient. The chain is NADH-quinone oxidoreductase subunit A from Rickettsia prowazekii (strain Madrid E).